We begin with the raw amino-acid sequence, 789 residues long: Glycerol-3-phosphate acyltransferase (789 aa).

An HXXXXD motif motif is present at residues 276 to 281 (HRSYID).

This sequence belongs to the GPAT/DAPAT family.

It localises to the cell membrane. The enzyme catalyses sn-glycerol 3-phosphate + an acyl-CoA = a 1-acyl-sn-glycero-3-phosphate + CoA. It participates in phospholipid metabolism; CDP-diacylglycerol biosynthesis; CDP-diacylglycerol from sn-glycerol 3-phosphate: step 1/3. The sequence is that of Glycerol-3-phosphate acyltransferase from Mycobacterium bovis (strain ATCC BAA-935 / AF2122/97).